The chain runs to 469 residues: Glutamate--tRNA ligase (469 aa).

A 'HIGH' region motif is present at residues 8–18 (PSPTGFLHVGG). Zn(2+)-binding residues include Cys97, Cys99, Cys124, and Asp126. Residues 236–240 (KLSKR) carry the 'KMSKS' region motif. Residue Lys239 coordinates ATP.

This sequence belongs to the class-I aminoacyl-tRNA synthetase family. Glutamate--tRNA ligase type 1 subfamily. Monomer. Zn(2+) is required as a cofactor.

Its subcellular location is the cytoplasm. The catalysed reaction is tRNA(Glu) + L-glutamate + ATP = L-glutamyl-tRNA(Glu) + AMP + diphosphate. Functionally, catalyzes the attachment of glutamate to tRNA(Glu) in a two-step reaction: glutamate is first activated by ATP to form Glu-AMP and then transferred to the acceptor end of tRNA(Glu). The sequence is that of Glutamate--tRNA ligase from Francisella philomiragia subsp. philomiragia (strain ATCC 25017 / CCUG 19701 / FSC 153 / O#319-036).